A 306-amino-acid chain; its full sequence is Putative dihydroorotate dehydrogenase A (fumarate) (306 aa).

FMN is bound by residues S20 and 44–45 (KG). Substrate is bound by residues K44 and 68–72 (NSIGL). The FMN site is built by N98 and N126. Substrate is bound at residue N126. Residue C129 is the Nucleophile of the active site. Residues K164 and I190 each contribute to the FMN site. 191–192 (NT) provides a ligand contact to substrate. Residues G216, 244–245 (GG), and 266–267 (GT) each bind FMN.

The protein belongs to the dihydroorotate dehydrogenase family. Type 1 subfamily. In terms of assembly, homodimer. FMN serves as cofactor.

It localises to the cytoplasm. The catalysed reaction is (S)-dihydroorotate + fumarate = orotate + succinate. It participates in pyrimidine metabolism; UMP biosynthesis via de novo pathway. Its function is as follows. Catalyzes the conversion of dihydroorotate to orotate with fumarate as the electron acceptor. The sequence is that of Putative dihydroorotate dehydrogenase A (fumarate) (pyrD) from Aquifex aeolicus (strain VF5).